Here is a 268-residue protein sequence, read N- to C-terminus: Undecaprenyl-diphosphatase (268 aa).

8 helical membrane-spanning segments follow: residues 9–29 (VILGVVEGVTEFLPVSSTGHL), 47–67 (FDVLIQLGAILAILALYFAKL), 83–103 (FIIGVLVAFLPAAVIGAAAGS), 107–127 (LFLFNPWVVCFSLIVGGAVLL), 144–164 (FPVLMYFYIGCAQCVAMIPGV), 184–204 (AAEFSFFLAIPTMVGAFVYDL), 218–238 (IVAVGFVVSFITAIIVVKTFL), and 246–266 (FQLFAWWRVVVGTLGLIALAM).

Belongs to the UppP family.

It is found in the cell inner membrane. The catalysed reaction is di-trans,octa-cis-undecaprenyl diphosphate + H2O = di-trans,octa-cis-undecaprenyl phosphate + phosphate + H(+). In terms of biological role, catalyzes the dephosphorylation of undecaprenyl diphosphate (UPP). Confers resistance to bacitracin. The protein is Undecaprenyl-diphosphatase of Rhodopseudomonas palustris (strain HaA2).